Here is a 330-residue protein sequence, read N- to C-terminus: DNA-directed RNA polymerase subunit alpha (330 aa).

The alpha N-terminal domain (alpha-NTD) stretch occupies residues 1 to 231 (MQTNLLKPKT…EQLAVFAQLE (231 aa)). An alpha C-terminal domain (alpha-CTD) region spans residues 250 to 330 (FDPILLRPVD…SWPPAGLDKR (81 aa)).

The protein belongs to the RNA polymerase alpha chain family. In terms of assembly, homodimer. The RNAP catalytic core consists of 2 alpha, 1 beta, 1 beta' and 1 omega subunit. When a sigma factor is associated with the core the holoenzyme is formed, which can initiate transcription.

The enzyme catalyses RNA(n) + a ribonucleoside 5'-triphosphate = RNA(n+1) + diphosphate. DNA-dependent RNA polymerase catalyzes the transcription of DNA into RNA using the four ribonucleoside triphosphates as substrates. In Polaromonas naphthalenivorans (strain CJ2), this protein is DNA-directed RNA polymerase subunit alpha.